Consider the following 129-residue polypeptide: uncharacterized protein (129 aa).

The tract at residues 34 to 57 (SAPLRPPRELHAAPPPATPTQTVV) is disordered.

This is an uncharacterized protein from Homo sapiens (Human).